A 318-amino-acid chain; its full sequence is Pyrimidine-specific ribonucleoside hydrolase RihA (318 aa).

His240 is a catalytic residue.

Belongs to the IUNH family. RihA subfamily.

Hydrolyzes cytidine or uridine to ribose and cytosine or uracil, respectively. This Shewanella baltica (strain OS185) protein is Pyrimidine-specific ribonucleoside hydrolase RihA.